Here is a 364-residue protein sequence, read N- to C-terminus: Protein BRI1-5 ENHANCED 1 (364 aa).

Acidic residues predominate over residues methionine 1–asparagine 11. Positions methionine 1–lysine 22 are disordered. NADP(+) contacts are provided by residues glycine 44–valine 49, arginine 69, aspartate 98–leucine 99, tyrosine 202, lysine 206, valine 232, and serine 244. The active-site Proton donor is lysine 206.

It belongs to the NAD(P)-dependent epimerase/dehydratase family. In terms of assembly, monomer. As to expression, mainly present in cell elongating-containing tissues. Strongly expressed in roots and flowers, also observed in petioles, stems, leaves and siliques.

The protein localises to the cytoplasm. The protein operates within plant hormone biosynthesis; brassinosteroid biosynthesis. Element of the brassinosteroid metabolic pathway that regulates typhasterol (TY), castasterone (CS) and brassinolide (BL) levels. Involved in the control of organ elongation. The protein is Protein BRI1-5 ENHANCED 1 of Arabidopsis thaliana (Mouse-ear cress).